Here is a 694-residue protein sequence, read N- to C-terminus: Long-chain-fatty-acid--CoA ligase 4 (694 aa).

The segment at 1–21 (MTEQYSVAVGEAANEHETAPR) is disordered. Residue 269 to 280 (YTSGSTGTPKGV) participates in ATP binding. The short motif at 527–576 (DGWFRTGDIAEWTPKGQVKIIDRKKNLVKTLNGEYIALEKLESIYRSNPY) is the FACS element.

The protein belongs to the ATP-dependent AMP-binding enzyme family. As to quaternary structure, interacts with FAT1. Mg(2+) serves as cofactor.

The protein localises to the lipid droplet. It carries out the reaction a long-chain fatty acid + ATP + CoA = a long-chain fatty acyl-CoA + AMP + diphosphate. The catalysed reaction is (9Z)-hexadecenoate + ATP + CoA = (9Z)-hexadecenoyl-CoA + AMP + diphosphate. The enzyme catalyses (9Z)-octadecenoate + ATP + CoA = (9Z)-octadecenoyl-CoA + AMP + diphosphate. It catalyses the reaction hexadecanoate + ATP + CoA = hexadecanoyl-CoA + AMP + diphosphate. Activates long-chain fatty acids (LCFA) by esterification of the fatty acids into metabolically active CoA-thioesters for subsequent degradation or incorporation into phospholipids. Also facilitates the transport of LCFAs into the cell, either by active transport or by decreasing the intracellular LCFA concentration. Contributes, with FAA1, to the activation of imported myristate. Also involved in long-chain base (LCB) uptake. In contrast ot LCFA uptake, LCB uptake does not require ATP, suggesting that the enzyme is directly involved in LCB uptake. Involved in the sphingolipid-to-glycerolipid metabolic pathway, converting the sphingolipid metabolite hexadecenoic acid to hexadecenoyl-CoA, which is then further converted to glycerolipids. This is Long-chain-fatty-acid--CoA ligase 4 (FAA4) from Saccharomyces cerevisiae (strain ATCC 204508 / S288c) (Baker's yeast).